Consider the following 153-residue polypeptide: 6,7-dimethyl-8-ribityllumazine synthase (153 aa).

5-amino-6-(D-ribitylamino)uracil-binding positions include Phe22, 56–58 (AFE), and 80–82 (TVI). 85-86 (ST) contributes to the (2S)-2-hydroxy-3-oxobutyl phosphate binding site. The active-site Proton donor is the His88. Phe113 provides a ligand contact to 5-amino-6-(D-ribitylamino)uracil. Arg127 contributes to the (2S)-2-hydroxy-3-oxobutyl phosphate binding site.

It belongs to the DMRL synthase family. In terms of assembly, forms an icosahedral capsid composed of 60 subunits, arranged as a dodecamer of pentamers.

It catalyses the reaction (2S)-2-hydroxy-3-oxobutyl phosphate + 5-amino-6-(D-ribitylamino)uracil = 6,7-dimethyl-8-(1-D-ribityl)lumazine + phosphate + 2 H2O + H(+). The protein operates within cofactor biosynthesis; riboflavin biosynthesis; riboflavin from 2-hydroxy-3-oxobutyl phosphate and 5-amino-6-(D-ribitylamino)uracil: step 1/2. Its function is as follows. Catalyzes the formation of 6,7-dimethyl-8-ribityllumazine by condensation of 5-amino-6-(D-ribitylamino)uracil with 3,4-dihydroxy-2-butanone 4-phosphate. This is the penultimate step in the biosynthesis of riboflavin. This Actinobacillus pleuropneumoniae (Haemophilus pleuropneumoniae) protein is 6,7-dimethyl-8-ribityllumazine synthase.